A 1071-amino-acid chain; its full sequence is ATP-dependent helicase/deoxyribonuclease subunit B (1071 aa).

It belongs to the helicase family. AddB/RexB type 2 subfamily. In terms of assembly, heterodimer of AddA and RexB. Mg(2+) serves as cofactor.

The heterodimer acts as both an ATP-dependent DNA helicase and an ATP-dependent, dual-direction single-stranded exonuclease. Recognizes the chi site generating a DNA molecule suitable for the initiation of homologous recombination. This subunit has 5' -&gt; 3' nuclease activity but not helicase activity. The protein is ATP-dependent helicase/deoxyribonuclease subunit B of Streptococcus pyogenes serotype M12 (strain MGAS9429).